The chain runs to 348 residues: Oxygen-dependent coproporphyrinogen-III oxidase (348 aa).

S104 serves as a coordination point for substrate. H108 and H118 together coordinate a divalent metal cation. H118 serves as the catalytic Proton donor. 120–122 is a substrate binding site; that stretch reads NYR. Positions 152 and 182 each coordinate a divalent metal cation. Residues 272 to 307 form an important for dimerization region; it reads YAEFNLVWDRGTIFGLQTNGRTESILMSLPPLARWE.

This sequence belongs to the aerobic coproporphyrinogen-III oxidase family. Homodimer. The cofactor is a divalent metal cation.

The protein resides in the cytoplasm. The catalysed reaction is coproporphyrinogen III + O2 + 2 H(+) = protoporphyrinogen IX + 2 CO2 + 2 H2O. The protein operates within porphyrin-containing compound metabolism; protoporphyrin-IX biosynthesis; protoporphyrinogen-IX from coproporphyrinogen-III (O2 route): step 1/1. Involved in the heme and chlorophyll biosynthesis. Catalyzes the aerobic oxidative decarboxylation of propionate groups of rings A and B of coproporphyrinogen-III to yield the vinyl groups in protoporphyrinogen-IX. This Prochlorococcus marinus (strain NATL2A) protein is Oxygen-dependent coproporphyrinogen-III oxidase.